The chain runs to 111 residues: Nucleoid-associated protein Clim_0875 (111 aa).

Belongs to the YbaB/EbfC family. In terms of assembly, homodimer.

Its subcellular location is the cytoplasm. The protein localises to the nucleoid. Functionally, binds to DNA and alters its conformation. May be involved in regulation of gene expression, nucleoid organization and DNA protection. This chain is Nucleoid-associated protein Clim_0875, found in Chlorobium limicola (strain DSM 245 / NBRC 103803 / 6330).